Here is a 148-residue protein sequence, read N- to C-terminus: uncharacterized protein (148 aa).

This is an uncharacterized protein from Acheta domesticus (House cricket).